A 334-amino-acid chain; its full sequence is N-acetyl-gamma-glutamyl-phosphate reductase (334 aa).

Cys-154 is an active-site residue.

This sequence belongs to the NAGSA dehydrogenase family. Type 1 subfamily.

It is found in the cytoplasm. It carries out the reaction N-acetyl-L-glutamate 5-semialdehyde + phosphate + NADP(+) = N-acetyl-L-glutamyl 5-phosphate + NADPH + H(+). It functions in the pathway amino-acid biosynthesis; L-arginine biosynthesis; N(2)-acetyl-L-ornithine from L-glutamate: step 3/4. Its function is as follows. Catalyzes the NADPH-dependent reduction of N-acetyl-5-glutamyl phosphate to yield N-acetyl-L-glutamate 5-semialdehyde. The protein is N-acetyl-gamma-glutamyl-phosphate reductase of Pectobacterium carotovorum subsp. carotovorum (strain PC1).